A 204-amino-acid polypeptide reads, in one-letter code: ATP synthase subunit 4, mitochondrial (204 aa).

The next 2 membrane-spanning stretches (helical) occupy residues 27 to 47 and 52 to 72; these read GILA…LYVV and ILLV…APLY.

In terms of assembly, F-type ATP synthases have 2 components, the catalytic core F(1) and the membrane-embedded component F(0), linked together by a central stalk and a peripheral stalk. The central stalk, also called rotor shaft, is often seen as part of F(1). The peripheral stalk is seen as part of F(0). F(0) contains the membrane channel next to the rotor. F-type ATP synthases form dimers but each monomer functions independently in ATP generation. The dimer consists of 18 different polypeptides: ATP1 (subunit alpha, part of F(1), 3 molecules per monomer), ATP2 (subunit beta, part of F(1), 3 molecules per monomer), ATP3 (subunit gamma, part of the central stalk), ATP4 (subunit b, part of the peripheral stalk), ATP5/OSCP (subunit 5/OSCP, part of the peripheral stalk), ATP6 (subunit a, part of the peripheral stalk), ATP7 (subunit d, part of the peripheral stalk), ATP8 (subunit 8, part of the peripheral stalk), OLI1 (subunit c, part of the rotor, 10 molecules per monomer), ATP14 (subunit h, part of the peripheral stalk), ATP15 (subunit epsilon, part of the central stalk), ATP16 (subunit delta, part of the central stalk), ATP17 (subunit f, part of the peripheral stalk), ATP18 (subunit i/j, part of the peripheral stalk). Dimer-specific subunits are ATP19 (subunit k, at interface between monomers), ATP20 (subunit g, at interface between monomers), TIM11 (subunit e, at interface between monomers). Also contains subunit L.

The protein resides in the mitochondrion inner membrane. Its function is as follows. Mitochondrial membrane ATP synthase (F(1)F(0) ATP synthase or Complex V) produces ATP from ADP in the presence of a proton gradient across the membrane which is generated by electron transport complexes of the respiratory chain. F-type ATP synthases consist of two structural domains, F(1) - containing the extramembraneous catalytic core, and F(0) - containing the membrane proton channel, linked together by a central stalk and a peripheral stalk. During catalysis, ATP synthesis in the catalytic domain of F(1) is coupled via a rotary mechanism of the central stalk subunits to proton translocation. Part of the complex F(0) domain and the peripheral stalk, which acts as a stator to hold the catalytic alpha/ATP1(3)beta/ATP2(3) subcomplex and subunit a/ATP6 static relative to the rotary elements. This Pichia angusta (Yeast) protein is ATP synthase subunit 4, mitochondrial.